We begin with the raw amino-acid sequence, 430 residues long: Adenylosuccinate synthetase (430 aa).

GTP-binding positions include 12–18 (GDEGKGK) and 40–42 (GHT). Asp-13 functions as the Proton acceptor in the catalytic mechanism. Mg(2+)-binding residues include Asp-13 and Gly-40. IMP-binding positions include 13–16 (DEGK), 38–41 (NAGH), Thr-130, Arg-144, Gln-224, Thr-239, and Arg-303. The active-site Proton donor is His-41. 299–305 (VNTGRKR) is a binding site for substrate. GTP-binding positions include Arg-305, 331-333 (KLD), and 413-415 (STS).

It belongs to the adenylosuccinate synthetase family. Homodimer. Mg(2+) is required as a cofactor.

Its subcellular location is the cytoplasm. The enzyme catalyses IMP + L-aspartate + GTP = N(6)-(1,2-dicarboxyethyl)-AMP + GDP + phosphate + 2 H(+). The protein operates within purine metabolism; AMP biosynthesis via de novo pathway; AMP from IMP: step 1/2. In terms of biological role, plays an important role in the de novo pathway of purine nucleotide biosynthesis. Catalyzes the first committed step in the biosynthesis of AMP from IMP. The sequence is that of Adenylosuccinate synthetase from Rhodopseudomonas palustris (strain ATCC BAA-98 / CGA009).